The primary structure comprises 360 residues: Peptide chain release factor 1 (360 aa).

Glutamine 235 carries the post-translational modification N5-methylglutamine. Positions 284 to 313 (AKRQQAEASTRRNLLGSGDRSDRNRTYNFP) are disordered.

This sequence belongs to the prokaryotic/mitochondrial release factor family. Methylated by PrmC. Methylation increases the termination efficiency of RF1.

Its subcellular location is the cytoplasm. Its function is as follows. Peptide chain release factor 1 directs the termination of translation in response to the peptide chain termination codons UAG and UAA. This chain is Peptide chain release factor 1, found in Citrobacter koseri (strain ATCC BAA-895 / CDC 4225-83 / SGSC4696).